We begin with the raw amino-acid sequence, 89 residues long: Small ribosomal subunit protein uS15 (89 aa).

It belongs to the universal ribosomal protein uS15 family. As to quaternary structure, part of the 30S ribosomal subunit. Forms a bridge to the 50S subunit in the 70S ribosome, contacting the 23S rRNA.

In terms of biological role, one of the primary rRNA binding proteins, it binds directly to 16S rRNA where it helps nucleate assembly of the platform of the 30S subunit by binding and bridging several RNA helices of the 16S rRNA. Forms an intersubunit bridge (bridge B4) with the 23S rRNA of the 50S subunit in the ribosome. This is Small ribosomal subunit protein uS15 from Kineococcus radiotolerans (strain ATCC BAA-149 / DSM 14245 / SRS30216).